Here is a 519-residue protein sequence, read N- to C-terminus: MFWRKSMKKSAWGLVDAFFDKYDLVDHHIHSYNDFVSNRIQEIIDTSEPIELEQGKYRVETGKVSIEKPFIKEADGSKSKIYPTEARLRNLTYSAHMSLEMRLLKEGGPETEFEKVYIGELPVMLKSEICHLHGLSRKELMEKGEDPADPGGYFIVNGSERSIVTMEEIAPNKIILERIGEEDENRARAIVTSIRSGFRARISLEYRKPRKTGVFLRISFPYVPGEIPLVILLRALGLATDQEIITSISDDFNYQMIAADDIQVSLDRLNLNKKEMKELDEEDRREYLIRSAIKYIGNRVAKGMTEDYRIKRAEDVIDRYLLPHIGTEPEKRLEKATYLAEMTEMLLQVISGERRPHDKDHYTNKRLRVSGDLMEDLLRVAFTSLSRDMSYQLERSLARGKEPSVKQAVRSDVLTENLKHAIATGNWVGGRAGVSQLLDRTSYMGTLSHMRRVVSPLSRSQPHFEARDLHPTQFGKICPNETPEGPNCGLVKNLALLAKISEGSDASEVEEVIKMGVVN.

It belongs to the RNA polymerase beta chain family. As to quaternary structure, part of the RNA polymerase complex.

The protein resides in the cytoplasm. The enzyme catalyses RNA(n) + a ribonucleoside 5'-triphosphate = RNA(n+1) + diphosphate. Functionally, DNA-dependent RNA polymerase (RNAP) catalyzes the transcription of DNA into RNA using the four ribonucleoside triphosphates as substrates. The Rpo2 subunit (Rpo2N and Rpo2C in this organism) is implicated in DNA promoter recognition and in nucleotide binding. The chain is DNA-directed RNA polymerase subunit Rpo2N from Methanothermobacter thermautotrophicus (strain ATCC 29096 / DSM 1053 / JCM 10044 / NBRC 100330 / Delta H) (Methanobacterium thermoautotrophicum).